Consider the following 533-residue polypeptide: Multicopy suppressor of sporulation protein msa1 (533 aa).

A disordered region spans residues 30–68 (DIPPGSLSENDNSTTFIKPPLETASSSTPIPSSSSSGVL). The span at 36–45 (LSENDNSTTF) shows a compositional bias: polar residues. Positions 54-68 (SSSTPIPSSSSSGVL) are enriched in low complexity. Positions 79–158 (ACLFVASLNS…RHIRIERAKV (80 aa)) constitute an RRM 1 domain. The disordered stretch occupies residues 237 to 292 (YKKKGSSPFSPPNAHSRRRKSQGKDQSNTPVIKAPAPIPFSVSSDPPSTMGRSNSA). A compositionally biased stretch (polar residues) spans 277-292 (SVSSDPPSTMGRSNSA). The RRM 2 domain occupies 365 to 441 (YSIFVGQLDP…KPLRVEFRQL (77 aa)).

Its subcellular location is the cytoplasm. Functionally, negative regulator of sexual differentiation. Acts by repressing the transcription of meiosis-inducing, ste11-regulated genes. The sequence is that of Multicopy suppressor of sporulation protein msa1 (msa1) from Schizosaccharomyces pombe (strain 972 / ATCC 24843) (Fission yeast).